Consider the following 209-residue polypeptide: MIRAIFGGTFDPIHNGHLQTAAALVKELGISTLALMPSAVPPHRPQPDASPEQRLDMVKLASQYHKAFTVEDWELRQDRPSFTANTLSEFKTQFPDDTLLFVMGMDSLMSLHRWHHWCQLIECAHLVVMPRAGVPFNPKNDELKEFISVHLTRDKNALNTQSQGLLYIAETPMVDVSATELRKQLQQREKNLPLPSNVYNYIRQHQLYL.

It belongs to the NadD family.

The catalysed reaction is nicotinate beta-D-ribonucleotide + ATP + H(+) = deamido-NAD(+) + diphosphate. The protein operates within cofactor biosynthesis; NAD(+) biosynthesis; deamido-NAD(+) from nicotinate D-ribonucleotide: step 1/1. In terms of biological role, catalyzes the reversible adenylation of nicotinate mononucleotide (NaMN) to nicotinic acid adenine dinucleotide (NaAD). In Idiomarina loihiensis (strain ATCC BAA-735 / DSM 15497 / L2-TR), this protein is Probable nicotinate-nucleotide adenylyltransferase.